A 62-amino-acid chain; its full sequence is Large ribosomal subunit protein uL29 (62 aa).

This sequence belongs to the universal ribosomal protein uL29 family.

The protein is Large ribosomal subunit protein uL29 of Laribacter hongkongensis (strain HLHK9).